An 83-amino-acid chain; its full sequence is MQNEAGEYVDLYIPRKCSTSNRIIHAKDHASIQINLAIVDEQSGRATGETKPYAICGAIRRMGESDDCITRLAKDDGYIPKDF.

The protein belongs to the eukaryotic ribosomal protein eS21 family. In terms of assembly, component of the 40S small ribosomal subunit.

Its subcellular location is the cytoplasm. It is found in the cytosol. It localises to the rough endoplasmic reticulum. In Ixodes scapularis (Black-legged tick), this protein is Small ribosomal subunit protein eS21 (RpS21).